A 149-amino-acid polypeptide reads, in one-letter code: UPF0178 protein Pmen_0294 (149 aa).

Belongs to the UPF0178 family.

The chain is UPF0178 protein Pmen_0294 from Ectopseudomonas mendocina (strain ymp) (Pseudomonas mendocina).